The sequence spans 517 residues: uncharacterized protein (517 aa).

The next 10 helical transmembrane spans lie at 35 to 55 (FSLI…IPGI), 81 to 101 (IAIY…GVFN), 102 to 122 (IGIS…ILKV), 135 to 155 (IITI…VAAL), 164 to 184 (VVSA…LVGT), 223 to 243 (LVIA…TVFG), 268 to 288 (FLSF…VYTA), 302 to 322 (FGIT…LIAL), 328 to 348 (IVIV…AGLN), and 352 to 372 (ASLV…MIYI).

It is found in the cell membrane. This is an uncharacterized protein from Mycoplasma pneumoniae (strain ATCC 29342 / M129 / Subtype 1) (Mycoplasmoides pneumoniae).